Reading from the N-terminus, the 191-residue chain is Polysulfide reductase chain B (191 aa).

3 4Fe-4S ferredoxin-type domains span residues 5–34 (YGMI…PDSV), 50–83 (GTLS…VNED), and 84–113 (GIVS…VDPV). [4Fe-4S] cluster contacts are provided by Cys-14, Cys-17, Cys-20, Cys-24, Cys-61, Cys-64, Cys-69, Cys-73, Cys-93, Cys-96, Cys-99, Cys-103, Cys-120, Cys-123, Cys-136, and Cys-140.

Functional polysulfide reductase is made up of three different (A, B, and C) subunits.

Its function is as follows. Component of the phosphorylative electron transport system with polysulfide as the terminal acceptor. This chain is Polysulfide reductase chain B (psrB), found in Wolinella succinogenes (strain ATCC 29543 / DSM 1740 / CCUG 13145 / JCM 31913 / LMG 7466 / NCTC 11488 / FDC 602W) (Vibrio succinogenes).